The primary structure comprises 122 residues: Large ribosomal subunit protein uL14 (122 aa).

The protein belongs to the universal ribosomal protein uL14 family. Part of the 50S ribosomal subunit. Forms a cluster with proteins L3 and L19. In the 70S ribosome, L14 and L19 interact and together make contacts with the 16S rRNA in bridges B5 and B8.

Its function is as follows. Binds to 23S rRNA. Forms part of two intersubunit bridges in the 70S ribosome. The chain is Large ribosomal subunit protein uL14 from Leptothrix cholodnii (strain ATCC 51168 / LMG 8142 / SP-6) (Leptothrix discophora (strain SP-6)).